The chain runs to 837 residues: Espin (837 aa).

9 ANK repeats span residues 1-31 (MALE…GPSL), 35-66 (LDAL…AVSR), 69-99 (NGAT…RVQE), 103-132 (SGAT…ANSA), 137-167 (TGAL…GVNA), 171-201 (NGAT…DPHL), 205-235 (DGMT…SFEQ), 238-267 (DGAT…EISQ), and 270-299 (WGGT…GLDV). Phosphoserine occurs at positions 337 and 341. Positions 339 to 348 (DPSMDLEAKQ) are enriched in basic and acidic residues. Disordered regions lie at residues 339 to 459 (DPSM…VGLH), 477 to 712 (DSLK…PATL), 745 to 767 (KLQQ…EARL), and 785 to 816 (EREQ…TLGY). The segment covering 351-364 (SGMSSPNTTMSVQP) has biased composition (polar residues). Positions 376 to 395 (LSNYDSCSSSHSSSKGQRST) are enriched in low complexity. Residues Ser400 and Ser401 each carry the phosphoserine modification. Pro residues predominate over residues 423-455 (SLPPPPPPSFPPPPPPGTQLPPPPPGYPAPNPP). Residues Ser497, Ser504, and Ser531 each carry the phosphoserine modification. Residues 581–604 (LPPPPPPPPLPEALSSPPPAPPLP) are compositionally biased toward pro residues. The span at 617-626 (SSSSTGSTKS) shows a compositional bias: low complexity. Polar residues-rich tracts occupy residues 627 to 636 (FNMMSPTGDN) and 651 to 662 (PTPQSKGLTTVF). Ser631 is modified (phosphoserine). Residues 635-652 (DNSELLAEIKAGKSLKPT) form the WH2 domain. A compositionally biased stretch (low complexity) spans 663 to 673 (SGSGQPASQPE). A phosphoserine mark is found at Ser670, Ser674, and Ser680. Residues 738–814 (KRQVMVRKLQ…KEQSEKLRTL (77 aa)) adopt a coiled-coil conformation.

As to quaternary structure, monomer. Interacts with PFN2. Binds F-actin in a Ca(2+)-resistant fashion. Interacts (via N-terminal) with BAIAP2 (via SH3-domain). Interacts with MYO3A (via C-terminus). Interacts with MYO3B (via C-terminus). As to expression, expressed at high concentration in the microvillar parallel actin bundle (PAB) of hair cells stereocilia in the cochlea and vestibular system. Detected also at high levels of a number of other sensory cell types, including taste receptor cells, solitary chemoreceptor cells, vomeronasal sensory neurons and Merkel cells. Isoform 1 is detected in testis. Isoforms 2 is detected in small intestine and kidney (at protein level). Isoforms 3, 4, 6 and 8 are expressed in Purkinje cells dendritic spines.

The protein localises to the cytoplasm. It localises to the cytoskeleton. The protein resides in the cell projection. It is found in the stereocilium. Its subcellular location is the microvillus. The protein localises to the cell junction. It localises to the dendritic spine. Multifunctional actin-bundling protein. Plays a major role in regulating the organization, dimension, dynamics and signaling capacities of the actin filament-rich microvilli in the mechanosensory and chemosensory cells. Required for the assembly and stabilization of the stereociliary parallel actin bundles. Plays a crucial role in the formation and maintenance of inner ear hair cell stereocilia. Involved in the elongation of actin in stereocilia. In extrastriolar hair cells, required for targeting MYO3B to stereocilia tips, and for regulation of stereocilia diameter and staircase formation. The sequence is that of Espin (Espn) from Rattus norvegicus (Rat).